Consider the following 148-residue polypeptide: Transcription antitermination protein NusB (148 aa).

Belongs to the NusB family.

Its function is as follows. Involved in transcription antitermination. Required for transcription of ribosomal RNA (rRNA) genes. Binds specifically to the boxA antiterminator sequence of the ribosomal RNA (rrn) operons. The sequence is that of Transcription antitermination protein NusB from Aquifex aeolicus (strain VF5).